We begin with the raw amino-acid sequence, 348 residues long: Dihydroorotase (348 aa).

Zn(2+)-binding residues include His17 and His19. Substrate contacts are provided by residues 19–21 and Asn45; that span reads HLR. Zn(2+) is bound by residues Lys103, His140, and His178. An N6-carboxylysine modification is found at Lys103. Substrate is bound at residue His140. Leu223 serves as a coordination point for substrate. Residue Asp251 coordinates Zn(2+). Asp251 is a catalytic residue. His255 and Ala267 together coordinate substrate.

It belongs to the metallo-dependent hydrolases superfamily. DHOase family. Class II DHOase subfamily. In terms of assembly, homodimer. Requires Zn(2+) as cofactor.

The catalysed reaction is (S)-dihydroorotate + H2O = N-carbamoyl-L-aspartate + H(+). It functions in the pathway pyrimidine metabolism; UMP biosynthesis via de novo pathway; (S)-dihydroorotate from bicarbonate: step 3/3. Catalyzes the reversible cyclization of carbamoyl aspartate to dihydroorotate. The sequence is that of Dihydroorotase from Cronobacter sakazakii (strain ATCC BAA-894) (Enterobacter sakazakii).